The sequence spans 396 residues: 8-amino-7-oxononanoate synthase (396 aa).

Arg19 lines the substrate pocket. Gly106 to Tyr107 is a binding site for pyridoxal 5'-phosphate. His131 provides a ligand contact to substrate. Pyridoxal 5'-phosphate contacts are provided by Ser176, His204, and Thr233. Lys236 is subject to N6-(pyridoxal phosphate)lysine. A substrate-binding site is contributed by Thr350.

Belongs to the class-II pyridoxal-phosphate-dependent aminotransferase family. BioF subfamily. As to quaternary structure, homodimer. Pyridoxal 5'-phosphate serves as cofactor.

The catalysed reaction is 6-carboxyhexanoyl-[ACP] + L-alanine + H(+) = (8S)-8-amino-7-oxononanoate + holo-[ACP] + CO2. The protein operates within cofactor biosynthesis; biotin biosynthesis. Catalyzes the decarboxylative condensation of pimeloyl-[acyl-carrier protein] and L-alanine to produce 8-amino-7-oxononanoate (AON), [acyl-carrier protein], and carbon dioxide. This Pseudomonas syringae pv. syringae (strain B728a) protein is 8-amino-7-oxononanoate synthase.